The chain runs to 755 residues: Cellulose synthase-like protein B3 (755 aa).

2 helical membrane passes run 24 to 44 (VVDL…ILLM) and 51 to 71 (WVVA…ITSI). Active-site residues include D136 and D461. 6 consecutive transmembrane segments (helical) span residues 534–556 (YLYI…LPAY), 569–589 (VYLG…LWEF), 615–635 (LFSI…VFIV), 674–694 (FLPG…CSVG), 702–722 (GSGL…LPFL), and 733–753 (IPWS…VFSV).

This sequence belongs to the glycosyltransferase 2 family. Plant cellulose synthase-like B subfamily. As to expression, expressed in young seedlings, primarily in the vascular tissue.

It localises to the golgi apparatus membrane. Functionally, thought to be a Golgi-localized beta-glycan synthase that polymerize the backbones of noncellulosic polysaccharides (hemicelluloses) of plant cell wall. The protein is Cellulose synthase-like protein B3 (CSLB3) of Arabidopsis thaliana (Mouse-ear cress).